The sequence spans 221 residues: 5-methylthioribulose-1-phosphate/5-deoxyribulose-1-phosphate aldolase (221 aa).

Glu-75 functions as the Proton donor/acceptor in the catalytic mechanism. Co(2+) is bound by residues Glu-75, His-94, His-96, and His-157.

It belongs to the aldolase class II family. Requires Co(2+) as cofactor.

It catalyses the reaction 5-(methylsulfanyl)-D-ribulose 1-phosphate = 2-(methylsulfanyl)acetaldehyde + dihydroxyacetone phosphate. The enzyme catalyses 5-deoxy-D-ribulose 1-phosphate = dihydroxyacetone phosphate + acetaldehyde. It participates in amino-acid biosynthesis; L-methionine biosynthesis via salvage pathway. Functionally, uses 5-methylthioribulose-1-phosphate to yield 2-(methylthio)acetaldehyde and dihydroxyacetone phosphate. Can also use 5-deoxyribulose 1-phosphate to yield acetaldehyde and dihydroxyacetone phosphate. Part of a bifunctional DHAP-shunt salvage pathway for SAM by-products. This Rhodospirillum rubrum (strain ATCC 11170 / ATH 1.1.1 / DSM 467 / LMG 4362 / NCIMB 8255 / S1) protein is 5-methylthioribulose-1-phosphate/5-deoxyribulose-1-phosphate aldolase.